The following is a 379-amino-acid chain: DNA replication and repair protein RecF (379 aa).

34 to 41 is a binding site for ATP; sequence GDNGAGKT.

Belongs to the RecF family.

It is found in the cytoplasm. Functionally, the RecF protein is involved in DNA metabolism; it is required for DNA replication and normal SOS inducibility. RecF binds preferentially to single-stranded, linear DNA. It also seems to bind ATP. The polypeptide is DNA replication and repair protein RecF (Mesorhizobium japonicum (strain LMG 29417 / CECT 9101 / MAFF 303099) (Mesorhizobium loti (strain MAFF 303099))).